The following is a 78-amino-acid chain: Sec-independent protein translocase protein TatA (78 aa).

Residues 1–21 (MGSLSIWHWIVVLAVVLLLFG) traverse the membrane as a helical segment. The tract at residues 43 to 78 (LAEDDEPAKTPAAPPEAPRPLPHQTSSAAEAEKKPV) is disordered. Pro residues predominate over residues 54–63 (AAPPEAPRPL).

The protein belongs to the TatA/E family. The Tat system comprises two distinct complexes: a TatABC complex, containing multiple copies of TatA, TatB and TatC subunits, and a separate TatA complex, containing only TatA subunits. Substrates initially bind to the TatABC complex, which probably triggers association of the separate TatA complex to form the active translocon.

Its subcellular location is the cell inner membrane. Functionally, part of the twin-arginine translocation (Tat) system that transports large folded proteins containing a characteristic twin-arginine motif in their signal peptide across membranes. TatA could form the protein-conducting channel of the Tat system. The protein is Sec-independent protein translocase protein TatA of Xanthobacter autotrophicus (strain ATCC BAA-1158 / Py2).